A 271-amino-acid polypeptide reads, in one-letter code: p-hydroxybenzoate hydroxylase transcriptional activator (271 aa).

In terms of domain architecture, HTH iclR-type spans 23-83 (IAGLAKGLAL…TDEHYFWLTH (61 aa)). The H-T-H motif DNA-binding region spans 45–64 (VTQVAERTGISRTAARRYLK). The IclR-ED domain maps to 98–271 (LPKVAQSFLN…NTANELRNLV (174 aa)).

Positive regulator of the pobA gene for p-hydroxybenzoate hydroxylase. In Acinetobacter baylyi (strain ATCC 33305 / BD413 / ADP1), this protein is p-hydroxybenzoate hydroxylase transcriptional activator (pobR).